The following is a 971-amino-acid chain: Exportin-2 (971 aa).

Residues 29 to 102 (AEKFLESVEG…KANIVNLMLS (74 aa)) form the Importin N-terminal domain.

The protein belongs to the XPO2/CSE1 family. Interacts with cftr.

It localises to the cytoplasm. The protein resides in the nucleus. Its function is as follows. Export receptor for importin alpha. Mediates importin-alpha re-export from the nucleus to the cytoplasm after import substrates have been released into the nucleoplasm. Negatively regulates fluid secretion and plays a role in fluid homeostasis by down-regulating cftr activity. The chain is Exportin-2 (cse1l) from Pagrus major (Red sea bream).